The chain runs to 619 residues: Kinesin light chain 4 (619 aa).

N-acetylserine is present on Ser-2. Residues 55 to 88 (QQGGHEEGLVHEKARQLRRSMENIELGLSEAQVM) form a TPR 1 repeat. The stretch at 65-155 (HEKARQLRRS…HLEFLRQLRQ (91 aa)) forms a coiled coil. The span at 156–175 (YDEDGHGMEEKEGEATKDSL) shows a compositional bias: basic and acidic residues. The interval 156-199 (YDEDGHGMEEKEGEATKDSLDDLFPNEEEEDSGNDLSRGQGAAA) is disordered. A Phosphoserine modification is found at Ser-174. Residues 179-188 (FPNEEEEDSG) show a composition bias toward acidic residues. TPR repeat units lie at residues 211 to 244 (LRTLHNLVIQYAAQGRYEVAVPLCKQALEDLERT), 253 to 286 (ATMLNILALVYRDQNKYKEAAHLLNDALSIREST), 295 to 328 (AATLNNLAVLYGKRGKYKEAEPLCQRALEIREKV), 337 to 370 (AKQLNNLALLCQNQGKYEAVERYYQRALAIYESQ), and 379 to 412 (ARTKNNLASCYLKQGKYSEAEALYKEILTCAHVQ). A Phosphoserine modification is found at Ser-460. The TPR 7 repeat unit spans residues 464–497 (NTTLKNLGALYRRQGKLEAAETLEECALRSRKQG). A phosphoserine mark is found at Ser-565, Ser-566, and Ser-590. Positions 571 to 619 (RKLQGTEPRPSSSSMKRAASLNYLNQPNAAPLQVSRGLSASTVDLSSSS) are disordered. The segment covering 609–619 (SASTVDLSSSS) has biased composition (low complexity). Residue Thr-612 is modified to Phosphothreonine.

The protein belongs to the kinesin light chain family. As to quaternary structure, oligomeric complex composed of two heavy chains and two light chains.

The protein resides in the cytoplasm. It is found in the cytoskeleton. In terms of biological role, kinesin is a microtubule-associated force-producing protein that may play a role in organelle transport. The light chain may function in coupling of cargo to the heavy chain or in the modulation of its ATPase activity. The sequence is that of Kinesin light chain 4 (Klc4) from Mus musculus (Mouse).